A 120-amino-acid polypeptide reads, in one-letter code: Large ribosomal subunit protein uL18 (120 aa).

It belongs to the universal ribosomal protein uL18 family. As to quaternary structure, part of the 50S ribosomal subunit; part of the 5S rRNA/L5/L18/L25 subcomplex. Contacts the 5S and 23S rRNAs.

This is one of the proteins that bind and probably mediate the attachment of the 5S RNA into the large ribosomal subunit, where it forms part of the central protuberance. This is Large ribosomal subunit protein uL18 from Rhizobium leguminosarum bv. trifolii (strain WSM2304).